The following is a 473-amino-acid chain: Keratin, type I cuticular Ha6 (473 aa).

A head region spans residues 1–93 (MATQICTPTF…FCEGAFNGNE (93 aa)). The 312-residue stretch at 93–404 (EKATMQILND…RLLDGEDCKL (312 aa)) folds into the IF rod domain. Positions 94–128 (KATMQILNDRLANYLEKVRQLEQENTQLECRIREW) are coil 1A. Positions 129-139 (YECQIPYICPD) are linker 1. Residues 140–240 (YQSYFKTAEE…HEEEVNALRS (101 aa)) form a coil 1B region. The interval 241 to 256 (QLGDRLNVEVDAAPPV) is linker 12. A coil 2 region spans residues 257–400 (DLNKILDDMR…ATYRRLLDGE (144 aa)). Positions 401–473 (DCKLPAHPCS…SREHVVPRAM (73 aa)) are tail.

It belongs to the intermediate filament family. As to quaternary structure, heterotetramer of two type I and two type II keratins. In terms of tissue distribution, in skin, only expressed in the suprabasal cells of tail scale epidermis. Suprabasally expressed in stratified squamous epithelia and also in the posterior unit of the complex filiform papillae of tongue. Expressed in rare anatomical sites in which an orthokeratinized stratum corneum would be too soft and a hard keratinized structure would be too rigid to meet the functional requirement of the respective epithelia.

The sequence is that of Keratin, type I cuticular Ha6 from Mus musculus (Mouse).